Here is a 143-residue protein sequence, read N- to C-terminus: Hemoglobin anodic subunit alpha (143 aa).

At serine 2 the chain carries N-acetylserine. The region spanning 2-143 (SLSAKDMAVV…FTLALSERYR (142 aa)) is the Globin domain. Histidine 60 lines the O2 pocket. A heme b-binding site is contributed by histidine 89.

The protein belongs to the globin family. Heterotetramer of two alpha chains and two beta chains. As to expression, red blood cells.

In terms of biological role, involved in oxygen transport from gills to the various peripheral tissues. The polypeptide is Hemoglobin anodic subunit alpha (hba) (Anguilla anguilla (European freshwater eel)).